The sequence spans 422 residues: 4-hydroxy-3-methylbut-2-en-1-yl diphosphate synthase (flavodoxin) (422 aa).

[4Fe-4S] cluster is bound by residues Cys316, Cys319, Cys362, and Glu369.

Belongs to the IspG family. It depends on [4Fe-4S] cluster as a cofactor.

The enzyme catalyses (2E)-4-hydroxy-3-methylbut-2-enyl diphosphate + oxidized [flavodoxin] + H2O + 2 H(+) = 2-C-methyl-D-erythritol 2,4-cyclic diphosphate + reduced [flavodoxin]. The protein operates within isoprenoid biosynthesis; isopentenyl diphosphate biosynthesis via DXP pathway; isopentenyl diphosphate from 1-deoxy-D-xylulose 5-phosphate: step 5/6. Its function is as follows. Converts 2C-methyl-D-erythritol 2,4-cyclodiphosphate (ME-2,4cPP) into 1-hydroxy-2-methyl-2-(E)-butenyl 4-diphosphate. In Ehrlichia ruminantium (strain Welgevonden), this protein is 4-hydroxy-3-methylbut-2-en-1-yl diphosphate synthase (flavodoxin).